Consider the following 93-residue polypeptide: Pyrimidine/purine nucleoside phosphorylase (93 aa).

This sequence belongs to the nucleoside phosphorylase PpnP family.

The enzyme catalyses a purine D-ribonucleoside + phosphate = a purine nucleobase + alpha-D-ribose 1-phosphate. The catalysed reaction is adenosine + phosphate = alpha-D-ribose 1-phosphate + adenine. It catalyses the reaction cytidine + phosphate = cytosine + alpha-D-ribose 1-phosphate. It carries out the reaction guanosine + phosphate = alpha-D-ribose 1-phosphate + guanine. The enzyme catalyses inosine + phosphate = alpha-D-ribose 1-phosphate + hypoxanthine. The catalysed reaction is thymidine + phosphate = 2-deoxy-alpha-D-ribose 1-phosphate + thymine. It catalyses the reaction uridine + phosphate = alpha-D-ribose 1-phosphate + uracil. It carries out the reaction xanthosine + phosphate = alpha-D-ribose 1-phosphate + xanthine. Catalyzes the phosphorolysis of diverse nucleosides, yielding D-ribose 1-phosphate and the respective free bases. Can use uridine, adenosine, guanosine, cytidine, thymidine, inosine and xanthosine as substrates. Also catalyzes the reverse reactions. The polypeptide is Pyrimidine/purine nucleoside phosphorylase (Pseudomonas syringae pv. syringae (strain B728a)).